The primary structure comprises 418 residues: Chromo domain-containing protein rhino (418 aa).

A Chromo domain is found at 24 to 74 (YVVEKILGKRFVNGRPQVLVKWSGFPNENNTWEPLENVGNCMKLVSDFESE). 2 stretches are compositionally biased toward low complexity: residues 84–99 (AKSV…SSGP) and 107–120 (SSSK…KSVQ). 2 disordered regions span residues 84–167 (AKSV…TDST) and 199–337 (PTKD…RCPR). A compositionally biased stretch (basic residues) spans 131-143 (NQKKGKNIKKTAG). Residues 152 to 167 (PKTQMPSTSQVSTDST) are compositionally biased toward polar residues. Residues 218–228 (RLIEFPQREDA) show a composition bias toward basic and acidic residues. The segment covering 258-275 (GESSSSMSLPTVSSTSSE) has biased composition (low complexity). Residues 276 to 285 (KSIKVTKSEP) are compositionally biased toward basic and acidic residues. Positions 353 to 418 (TKPFGVNRGL…FESLRIIVPK (66 aa)) are required for interaction with del/deadlock.

Homodimer in solution. Dimerization is essential for chromatin binding. Component of the Rhino-Deadlock-Cutoff (RDC) complex, composed of rhi/rhino, del/deadlock and cuff/cutoff. Interacts (via C-terminus) with del/deadlock (via N-terminus); this interaction is direct. Two copies of del/deadlock associate with each rhi/rhino dimer. Interacts with cuff/cutoff; this interaction is indirect and is mediated by del/deadlock. Interacts (via Chromo domain) with kipf/kipferl (via C2H2 type zinc finger 4). Interacts (via Chromo domain) with His3/histone H3 (via N-terminus di- or tri-methylated on 'Lys-10' (H3K9me2/3)); this interaction is direct. Two His3 N-terminal tails oriented anti-parallel to each other are required for dimer binding to His3. As to expression, female specific, expressed in both somatic and germline cells but highly enriched in ovaries. In the germarium of the developing oocyte expressed in germline stem cells, cystoblasts and developing germline cysts. Expressed in nurse cells in the germarium and egg chamber.

It localises to the nucleus. The protein resides in the chromosome. Its function is as follows. Involved in piRNA (piwi-interacting RNA)-mediated transposon repression. May be involved in formation of the perinuclear nuage, a subcellular structure implicated in RNA processing that may be involved in transposon RNA surveillance and silencing. Required for ping-pong amplification during piRNA biogenesis, probably by promoting transcription of piRNA precursors. As part of the Rhino-Deadlock-Cutoff (RDC) Complex associates with, and drives non-canonical transcription of germline specific dual-strand piRNA clusters 80F, 38C and 42AB, but not single-stranded piRNA cluster 20A. Induction of piRNA expression is potentially achieved through a mechanism that prevents transcriptional termination and leads to readthrough from flanking transcription units. Recruited to specific chromatin regions by a combination of H3K9me2/3 histone methylation and differentially expressed sequence-specific recruitment factors. This association may involve direct interaction with DNA. Associates with chromatin upon exposure to homologous piRNA and facilitates transcriptional read-through. As part of the RDC complex, involved in suppression of splicing. In ovaries, recruitment to specific heterochromatin clusters is nucleated and stabilized by kipf/kipferl. During oogenesis, involved in axis specification and may regulate chromosome condensation at the onset of a mitotic-like phase that occurs during nurse cell chromosome duplication. Involved in the distribution of mRNAs for proteins that play a role in anterior-posterior and dorsal-ventral axes specification during development of the oocyte, including grk/gurken, osk/oskar and vas/vasa. Mitigates meiotic double strand breaks and interacts with DNA damage signaling to mediate axis specification. This chain is Chromo domain-containing protein rhino, found in Drosophila melanogaster (Fruit fly).